Here is a 150-residue protein sequence, read N- to C-terminus: 1,4-dihydroxy-2-naphthoyl-CoA hydrolase (150 aa).

Residue aspartate 22 is part of the active site.

The protein belongs to the 4-hydroxybenzoyl-CoA thioesterase family. DHNA-CoA hydrolase subfamily.

It catalyses the reaction 1,4-dihydroxy-2-naphthoyl-CoA + H2O = 1,4-dihydroxy-2-naphthoate + CoA + H(+). It participates in cofactor biosynthesis; phylloquinone biosynthesis. The protein operates within quinol/quinone metabolism; 1,4-dihydroxy-2-naphthoate biosynthesis; 1,4-dihydroxy-2-naphthoate from chorismate: step 7/7. Its function is as follows. Catalyzes the hydrolysis of 1,4-dihydroxy-2-naphthoyl-CoA (DHNA-CoA) to 1,4-dihydroxy-2-naphthoate (DHNA), a reaction involved in phylloquinone (vitamin K1) biosynthesis. The polypeptide is 1,4-dihydroxy-2-naphthoyl-CoA hydrolase (Prochlorococcus marinus (strain NATL1A)).